A 650-amino-acid chain; its full sequence is Epithelial sodium channel subunit gamma (650 aa).

Residues 1–55 (MAPGEKIKAKIKKNLPVRGPQAPTIKDLMHWYCMNTNTHGCRRIVVSRGRLRRLL) are Cytoplasmic-facing. Residues 56-76 (WIAFTLTAVALIIWQCALLVF) form a helical membrane-spanning segment. At 77-542 (SFYTVSVSIK…GGQLGLWMSC (466 aa)) the chain is on the extracellular side. Disulfide bonds link Cys-100–Cys-284, Cys-208–Cys-215, Cys-261–Cys-268, Cys-373–Cys-458, Cys-395–Cys-454, Cys-399–Cys-450, Cys-408–Cys-435, and Cys-410–Cys-424. The segment at 135–222 (RKRREAGSMP…SDCATYTFSS (88 aa)) is gating release of inhibition by proteolysis (GRIP); protease-sensitive region that is responsible for the proteolytic activation of the channel. An N-linked (GlcNAc...) asparagine glycan is attached at Asn-210. N-linked (GlcNAc...) asparagine glycosylation is present at Asn-272. A glycan (N-linked (GlcNAc...) asparagine) is linked at Asn-498. Residues 543–563 (SVVCVIEIIEVFFIDFFSIIA) traverse the membrane as a helical segment. The Cytoplasmic segment spans residues 564–650 (RRQWHKAKDW…LTDTQLTNEL (87 aa)). Positions 577-628 (RQTPPSTETPSSRQGQDNPALDTDDDLPTFTSAMRLPPAPGSTVPGTPPPRY) are disordered. The segment covering 579-593 (TPPSTETPSSRQGQD) has biased composition (polar residues). The PY motif; mediates interaction, ubiquitination and inhibition by NEDD4 and NEDD4L signature appears at 624 to 628 (PPPRY). The PY motif; recruits WW domain-containing proteins and is thereby required for ubiquitination and inhibition of the channel by NEDD4 and NEDD4L motif lies at 624–628 (PPPRY).

It belongs to the amiloride-sensitive sodium channel (TC 1.A.6) family. SCNN1G subfamily. As to quaternary structure, component of the heterotrimeric epithelial sodium channel (ENaC) composed of an alpha/SCNN1A, a beta/SCNN1B and a gamma/SCNN1G subunit. Interacts with WWP1 (via WW domains). Interacts with WWP2 (via WW domains); inhibits the channel. Interacts with the full-length immature form of PCSK9 (pro-PCSK9); inhibits ENaC by promoting its proteasomal degradation. Interacts with BPIFA1; the interaction is indirect via SCNN1B and inhibits the proteolytic maturation of SCNN1A and SCNN1G and the activation of ENaC. Post-translationally, phosphorylated on serine and threonine residues. Aldosterone and insulin increase the basal level of phosphorylation. Ubiquitinated. Can be ubiquitinated at multiple sites and undergo monoubiquitination and polyubiquitination. Ubiquitination by NEDD4 or NEDD4L inhibits the ENaC channel through endocytosis, intracellular retention and degradation of its individual subunits. In terms of processing, ENaC is activated through the proteolytic maturation of its subunits. Furin cleaves the SCNN1G subunit first, followed by cleavage by prostasin (PRSS8), which results in a stepwise increase in the open probability of the channel due to the release of an inhibitory tract. BPIFA1, which is recruited by the SCNN1B subunit, prevents the proteolytic activation of ENaC. Post-translationally, N-glycosylated. N-linked glycans are processed to complex type during ENaC complex assembly and transport to the plasma membrane.

The protein localises to the apical cell membrane. It catalyses the reaction Na(+)(in) = Na(+)(out). With respect to regulation, originally identified and characterized by its inhibition by the diuretic drug amiloride. Functionally, this is one of the three pore-forming subunits of the heterotrimeric epithelial sodium channel (ENaC), a critical regulator of sodium balance and fluid homeostasis. ENaC operates in epithelial tissues, where it mediates the electrodiffusion of sodium ions from extracellular fluid through the apical membrane of cells, with water following osmotically. It plays a key role in maintaining sodium homeostasis through electrogenic sodium reabsorption in the kidneys. Additionally, ENaC is essential for airway surface liquid homeostasis, which is crucial for proper mucus clearance. This Rattus norvegicus (Rat) protein is Epithelial sodium channel subunit gamma.